A 571-amino-acid polypeptide reads, in one-letter code: Transcription factor ABORTED MICROSPORES (571 aa).

Residues 275–284 show a composition bias toward basic and acidic residues; the sequence is NDKDMNENGR. Disordered stretches follow at residues 275-321, 365-390, and 536-571; these read NDKD…AERR, ELQDELEENSETEDGSNRPQGGMSLN, and DDHQHHNGHHHPFDHQMNQSAHHHHHHQHINHYHNQ. One can recognise a bHLH domain in the interval 310 to 359; that stretch reads GSQAKNLMAERRRRKKLNDRLYALRSLVPRITKLDRASILGDAINYVKEL. Residues 368–378 are compositionally biased toward acidic residues; that stretch reads DELEENSETED. The span at 381–390 shows a compositional bias: polar residues; that stretch reads NRPQGGMSLN. Residues 556 to 571 show a composition bias toward basic residues; it reads AHHHHHHQHINHYHNQ.

Homodimer. Interacts with ASHR3. Mostly expressed in closed, post-meiotic buds, and, to a lower extent, in pre-meiotic buds. Detected in leaves, stems, and flowers.

The protein localises to the nucleus. Functionally, transcription factor. Plays a crucial role in tapetum development. Required for male fertility and pollen differentiation, especially during the post-meiotic transcriptional regulation of microspore development within the developing anther. Binds E-box regions in the AHL16/TEK promoter. In Arabidopsis thaliana (Mouse-ear cress), this protein is Transcription factor ABORTED MICROSPORES (AMS).